Consider the following 332-residue polypeptide: 2,3-diketo-L-gulonate reductase (332 aa).

H44 (proton donor) is an active-site residue. NAD(+)-binding positions include 168 to 174 (ITMVDMS), 224 to 225 (WK), and 304 to 306 (GHE).

This sequence belongs to the LDH2/MDH2 oxidoreductase family. DlgD subfamily. In terms of assembly, homodimer.

It is found in the cytoplasm. The enzyme catalyses 3-dehydro-L-gulonate + NAD(+) = 2,3-dioxo-L-gulonate + NADH + H(+). It catalyses the reaction 3-dehydro-L-gulonate + NADP(+) = 2,3-dioxo-L-gulonate + NADPH + H(+). Catalyzes the reduction of 2,3-diketo-L-gulonate in the presence of NADH, to form 3-keto-L-gulonate. This Klebsiella pneumoniae (strain 342) protein is 2,3-diketo-L-gulonate reductase.